We begin with the raw amino-acid sequence, 1529 residues long: DNA (cytosine-5)-methyltransferase 1B (1529 aa).

Disordered regions lie at residues 1 to 56 and 674 to 706; these read MVKS…RAAC and DDELEENEDEDAEEEAQIEEENVSKTPPSTRSR. Residues 21 to 35 show a composition bias toward basic and acidic residues; sequence QKKDEDTTDKGKLDE. The segment covering 674–694 has biased composition (acidic residues); that stretch reads DDELEENEDEDAEEEAQIEEE. Polar residues predominate over residues 697–706; sequence SKTPPSTRSR. 2 BAH domains span residues 741–873 and 910–1049; these read LRIN…FSLP and ITYN…KQLP. The SAM-dependent MTase C5-type domain occupies 1093–1527; sequence LATLDIFAGC…RKLKEAVDAK (435 aa). The active site involves Cys1198.

The protein belongs to the class I-like SAM-binding methyltransferase superfamily. C5-methyltransferase family. In terms of tissue distribution, expressed in roots and inflorescences. Expressed in roots, panicles, anthers, pistils, endosperm and imbibed embryos. Expressed in tissues containing actively replicating and dividing cells, such as shoot and root meristems.

The protein resides in the nucleus. The enzyme catalyses a 2'-deoxycytidine in DNA + S-adenosyl-L-methionine = a 5-methyl-2'-deoxycytidine in DNA + S-adenosyl-L-homocysteine + H(+). Major CG methylase that methylates chromatin CpG residues and maintains DNA methylation. Plays a major role in genomic imprinting, regulation of embryogenesis and seed viability. Maintains DNA methylation at the FIE1 gene locus in the embryo. In Oryza sativa subsp. japonica (Rice), this protein is DNA (cytosine-5)-methyltransferase 1B (MET1B).